The following is a 465-amino-acid chain: MVICLLLCTPTDIFVVASPEVNETQEYVPVNVYHDTDVTRKKIVTAQFECYQKIMKDNDHNKIGPVCNRTWDGWLCWDDTEAGFTSEQYCPDYFQDFDPSELVTKICSDNGHWFLHPESNRTWTNYTRCNEHTNEGRMTAMNLFYLALIGHGLSLTSLLISLGIFFYFKSLSCQRITLHKNLFFSFVLNSVITIIWLTAVANNQELVQRNPTSCKVSQFIHLYLFGCNYFWMLCEGIYLHTLIVVAVFAEKQHLMWYYLLGWGFPLIPASIHAIARSYYYNDNCWISSNTSLLYIIHGPICAALLVNLFFLLNIVRVLITKLKVTHQAESSLYMKAVRATLILVPLLGIQYVLLPYKPEGRVSSEIYDYIMHILMHYQGLLVATIFCFFNGEVQGVLRRHWNQYRIQFGSTFAHSDAMRSASYTASSITEVQGCYSIDSHTEHLNGKGAPLDIETSILKSENPFT.

The first 17 residues, 1 to 17 (MVICLLLCTPTDIFVVA), serve as a signal peptide directing secretion. Residues 18–141 (SPEVNETQEY…HTNEGRMTAM (124 aa)) lie on the Extracellular side of the membrane. Asn-22, Asn-68, Asn-120, and Asn-125 each carry an N-linked (GlcNAc...) asparagine glycan. 3 cysteine pairs are disulfide-bonded: Cys-50/Cys-76, Cys-67/Cys-107, and Cys-90/Cys-129. The chain crosses the membrane as a helical span at residues 142 to 166 (NLFYLALIGHGLSLTSLLISLGIFF). Residues 167-177 (YFKSLSCQRIT) lie on the Cytoplasmic side of the membrane. A helical membrane pass occupies residues 178 to 200 (LHKNLFFSFVLNSVITIIWLTAV). Topologically, residues 201-211 (ANNQELVQRNP) are extracellular. A helical membrane pass occupies residues 212–240 (TSCKVSQFIHLYLFGCNYFWMLCEGIYLH). Topologically, residues 241 to 254 (TLIVVAVFAEKQHL) are cytoplasmic. The helical transmembrane segment at 255-275 (MWYYLLGWGFPLIPASIHAIA) threads the bilayer. Over 276–291 (RSYYYNDNCWISSNTS) the chain is Extracellular. Asn-289 carries an N-linked (GlcNAc...) asparagine glycan. A helical membrane pass occupies residues 292 to 316 (LLYIIHGPICAALLVNLFFLLNIVR). Topologically, residues 317–331 (VLITKLKVTHQAESS) are cytoplasmic. A helical transmembrane segment spans residues 332-353 (LYMKAVRATLILVPLLGIQYVL). Residues 354–368 (LPYKPEGRVSSEIYD) are Extracellular-facing. A helical transmembrane segment spans residues 369–389 (YIMHILMHYQGLLVATIFCFF). At 390-465 (NGEVQGVLRR…SILKSENPFT (76 aa)) the chain is on the cytoplasmic side.

Belongs to the G-protein coupled receptor 2 family.

It is found in the cell membrane. In terms of biological role, may function as G protein-coupled receptor for calcitonin-gene-related peptides and adrenomedullin. Specificity may be modulated by accessory proteins. May activate cAMP-dependent pathway. The sequence is that of Calcitonin gene-related peptide type 1 receptor (calcrl) from Oncorhynchus gorbuscha (Pink salmon).